Consider the following 421-residue polypeptide: Acyl-coenzyme A thioesterase 5 (421 aa).

Residues Ser232, Asp326, and His360 each act as charge relay system in the active site. The short motif at 419–421 (AKL) is the Microbody targeting signal element.

The protein belongs to the C/M/P thioester hydrolase family. In terms of tissue distribution, highly expressed in spleen, brain, testis and proximal and distal intestine; expressed at low level in the liver.

It localises to the peroxisome. The enzyme catalyses hexadecanoyl-CoA + H2O = hexadecanoate + CoA + H(+). It catalyses the reaction decanoyl-CoA + H2O = decanoate + CoA + H(+). It carries out the reaction octanoyl-CoA + H2O = octanoate + CoA + H(+). The catalysed reaction is dodecanoyl-CoA + H2O = dodecanoate + CoA + H(+). The enzyme catalyses tetradecanoyl-CoA + H2O = tetradecanoate + CoA + H(+). It catalyses the reaction octadecanoyl-CoA + H2O = octadecanoate + CoA + H(+). It carries out the reaction eicosanoyl-CoA + H2O = eicosanoate + CoA + H(+). The catalysed reaction is (9Z)-octadecenoyl-CoA + H2O = (9Z)-octadecenoate + CoA + H(+). The enzyme catalyses (9Z,12Z)-octadecadienoyl-CoA + H2O = (9Z,12Z)-octadecadienoate + CoA + H(+). It catalyses the reaction (5Z,8Z,11Z,14Z)-eicosatetraenoyl-CoA + H2O = (5Z,8Z,11Z,14Z)-eicosatetraenoate + CoA + H(+). It carries out the reaction (9Z)-hexadecenoyl-CoA + H2O = (9Z)-hexadecenoate + CoA + H(+). The protein operates within lipid metabolism; fatty acid metabolism. Catalyzes the hydrolysis of acyl-CoAs into free fatty acids and coenzyme A (CoASH), regulating their respective intracellular levels. Mainly active on medium-chain acyl-CoAs. Seems to be involved in intraperoxisomal regulation of acyl-CoA levels, but not CoASH levels. May have a function in termination of beta-oxidation of fatty acids. The protein is Acyl-coenzyme A thioesterase 5 (Acot5) of Mus musculus (Mouse).